A 376-amino-acid chain; its full sequence is Succinyl-diaminopimelate desuccinylase (376 aa).

A Zn(2+)-binding site is contributed by His67. Residue Asp69 is part of the active site. Asp100 is a binding site for Zn(2+). Glu134 serves as the catalytic Proton acceptor. Positions 135, 163, and 349 each coordinate Zn(2+).

It belongs to the peptidase M20A family. DapE subfamily. Homodimer. It depends on Zn(2+) as a cofactor. Co(2+) serves as cofactor.

The enzyme catalyses N-succinyl-(2S,6S)-2,6-diaminopimelate + H2O = (2S,6S)-2,6-diaminopimelate + succinate. It functions in the pathway amino-acid biosynthesis; L-lysine biosynthesis via DAP pathway; LL-2,6-diaminopimelate from (S)-tetrahydrodipicolinate (succinylase route): step 3/3. Catalyzes the hydrolysis of N-succinyl-L,L-diaminopimelic acid (SDAP), forming succinate and LL-2,6-diaminopimelate (DAP), an intermediate involved in the bacterial biosynthesis of lysine and meso-diaminopimelic acid, an essential component of bacterial cell walls. The sequence is that of Succinyl-diaminopimelate desuccinylase from Idiomarina loihiensis (strain ATCC BAA-735 / DSM 15497 / L2-TR).